A 110-amino-acid polypeptide reads, in one-letter code: Small ribosomal subunit protein bS16 (110 aa).

Residues 84 to 110 (KRTARNNPEKAVPRKERKAQAEAAAKS) form a disordered region. Over residues 90 to 103 (NPEKAVPRKERKAQ) the composition is skewed to basic and acidic residues.

Belongs to the bacterial ribosomal protein bS16 family.

The polypeptide is Small ribosomal subunit protein bS16 (Nitrobacter hamburgensis (strain DSM 10229 / NCIMB 13809 / X14)).